An 82-amino-acid chain; its full sequence is Progonadoliberin-3 (82 aa).

The signal sequence occupies residues 1–23; that stretch reads MDLSNRTVVQVVVLALVAQVTLS. Q24 carries the pyrrolidone carboxylic acid modification. G33 is modified (glycine amide).

The protein belongs to the GnRH family. Brain.

Its subcellular location is the secreted. Functionally, stimulates the secretion of gonadotropins. The sequence is that of Progonadoliberin-3 (gnrh3) from Oncorhynchus nerka (Sockeye salmon).